The sequence spans 158 residues: UPAR/Ly6 domain-containing protein crim (158 aa).

The N-terminal stretch at 1–22 (MHYHTNLIAALLLAALIHEGSA) is a signal peptide. Topologically, residues 23 to 136 (IWCYRCTSAT…FCFLDHRCNG (114 aa)) are extracellular. An N-linked (GlcNAc...) asparagine glycan is attached at Asn107. Asn135 is lipidated: GPI-anchor amidated asparagine. A propeptide spans 136–158 (GASGLQTSAVIGLLTLIPALLLR) (removed in mature form). The chain crosses the membrane as a helical span at residues 137–157 (ASGLQTSAVIGLLTLIPALLL). Position 158 (Arg158) is a topological domain, cytoplasmic.

The protein belongs to the quiver family.

The protein localises to the membrane. In terms of biological role, required for septate junction assembly possibly by organizing the preassembly and transport of septate junction proteins. Involved in epithelial cell septate junction-mediated paracellular barrier functions of trachea, hindgut and salivary gland. The sequence is that of UPAR/Ly6 domain-containing protein crim from Drosophila melanogaster (Fruit fly).